Here is a 687-residue protein sequence, read N- to C-terminus: Polyphosphate kinase (687 aa).

Asn45 is an ATP binding site. Residues Arg373 and Arg403 each coordinate Mg(2+). His433 acts as the Phosphohistidine intermediate in catalysis. Residues Tyr466, Arg562, and His590 each coordinate ATP. Residues 585–615 (DRFLEHDRVYVFENKGDKLVYLSSADWMTRN) form the PLD phosphodiesterase domain.

The protein belongs to the polyphosphate kinase 1 (PPK1) family. It depends on Mg(2+) as a cofactor. Post-translationally, an intermediate of this reaction is the autophosphorylated ppk in which a phosphate is covalently linked to a histidine residue through a N-P bond.

It catalyses the reaction [phosphate](n) + ATP = [phosphate](n+1) + ADP. Catalyzes the reversible transfer of the terminal phosphate of ATP to form a long-chain polyphosphate (polyP). The chain is Polyphosphate kinase from Yersinia pestis.